The chain runs to 224 residues: E3 ubiquitin-protein ligase TRIM48 (224 aa).

Residues 31 to 72 (CPICMNYFIDPVTIDCGHSFCRPCFYLNWQDIPILTQCFECI) form an RING-type zinc finger. Residues 104 to 145 (SEEQMCGIHRETKKMFCEVDRSLLCLLCSSSQEHRYHRHCPA) form a B box-type zinc finger. The Zn(2+) site is built by Cys-109, His-112, Cys-131, and His-137.

It belongs to the TRIM/RBCC family. Interacts with PRMT1; the interaction leads to ubiquitination of PRMT1 by TRIM48. Interacts with MAP3K5. Interacts with STRAP.

The protein localises to the cytoplasm. Its subcellular location is the cytosol. The catalysed reaction is S-ubiquitinyl-[E2 ubiquitin-conjugating enzyme]-L-cysteine + [acceptor protein]-L-lysine = [E2 ubiquitin-conjugating enzyme]-L-cysteine + N(6)-ubiquitinyl-[acceptor protein]-L-lysine.. In terms of biological role, E3 ubiquitin-protein ligase which promotes K48-linked polyubiquitination of protein methyltransferase PRMT1, leading to PRMT1 degradation. This suppresses methylation of the PRMT1 substrate MAP3K5/ASK1, promoting its activation and increasing MAP3K5-dependent cell death induced by oxidative stress. TRIM48-mediated ubiquitination of PRMT1 also suppresses methylation of FOXO1 by PRMT1, leading to inhibition of FOXO1 transcriptional activity. This is E3 ubiquitin-protein ligase TRIM48 from Homo sapiens (Human).